Reading from the N-terminus, the 243-residue chain is Triosephosphate isomerase (243 aa).

Substrate is bound at residue 9–11; it reads NWK. Histidine 96 serves as the catalytic Electrophile. Glutamate 165 (proton acceptor) is an active-site residue. Substrate is bound by residues glycine 171, serine 204, and 225 to 226; that span reads GG.

The protein belongs to the triosephosphate isomerase family. As to quaternary structure, homodimer.

It localises to the cytoplasm. It catalyses the reaction D-glyceraldehyde 3-phosphate = dihydroxyacetone phosphate. Its pathway is carbohydrate biosynthesis; gluconeogenesis. It functions in the pathway carbohydrate degradation; glycolysis; D-glyceraldehyde 3-phosphate from glycerone phosphate: step 1/1. Involved in the gluconeogenesis. Catalyzes stereospecifically the conversion of dihydroxyacetone phosphate (DHAP) to D-glyceraldehyde-3-phosphate (G3P). This is Triosephosphate isomerase from Parasynechococcus marenigrum (strain WH8102).